Reading from the N-terminus, the 273-residue chain is Acetyl-coenzyme A carboxylase carboxyl transferase subunit alpha (273 aa).

In terms of domain architecture, CoA carboxyltransferase C-terminal spans 1-244; it reads MKKATQSKAW…KVVLKQALDE (244 aa).

Belongs to the AccA family. In terms of assembly, acetyl-CoA carboxylase is a heterohexamer composed of biotin carboxyl carrier protein (AccB), biotin carboxylase (AccC) and two subunits each of ACCase subunit alpha (AccA) and ACCase subunit beta (AccD).

The protein localises to the cytoplasm. The catalysed reaction is N(6)-carboxybiotinyl-L-lysyl-[protein] + acetyl-CoA = N(6)-biotinyl-L-lysyl-[protein] + malonyl-CoA. Its pathway is lipid metabolism; malonyl-CoA biosynthesis; malonyl-CoA from acetyl-CoA: step 1/1. In terms of biological role, component of the acetyl coenzyme A carboxylase (ACC) complex. First, biotin carboxylase catalyzes the carboxylation of biotin on its carrier protein (BCCP) and then the CO(2) group is transferred by the carboxyltransferase to acetyl-CoA to form malonyl-CoA. The sequence is that of Acetyl-coenzyme A carboxylase carboxyl transferase subunit alpha from Acinetobacter baumannii (strain AB0057).